Reading from the N-terminus, the 252-residue chain is Imidazole glycerol phosphate synthase subunit HisF (252 aa).

Active-site residues include D11 and D130.

Belongs to the HisA/HisF family. Heterodimer of HisH and HisF.

Its subcellular location is the cytoplasm. The enzyme catalyses 5-[(5-phospho-1-deoxy-D-ribulos-1-ylimino)methylamino]-1-(5-phospho-beta-D-ribosyl)imidazole-4-carboxamide + L-glutamine = D-erythro-1-(imidazol-4-yl)glycerol 3-phosphate + 5-amino-1-(5-phospho-beta-D-ribosyl)imidazole-4-carboxamide + L-glutamate + H(+). The protein operates within amino-acid biosynthesis; L-histidine biosynthesis; L-histidine from 5-phospho-alpha-D-ribose 1-diphosphate: step 5/9. In terms of biological role, IGPS catalyzes the conversion of PRFAR and glutamine to IGP, AICAR and glutamate. The HisF subunit catalyzes the cyclization activity that produces IGP and AICAR from PRFAR using the ammonia provided by the HisH subunit. In Bacillus cytotoxicus (strain DSM 22905 / CIP 110041 / 391-98 / NVH 391-98), this protein is Imidazole glycerol phosphate synthase subunit HisF.